The sequence spans 127 residues: MGVERYLLVALGGALGSLLRYGLGAWVQGSLGAGFPWSTLFVNALGSFLIGLTLRLSLEGALSGEARLFLAVGVLGGFTTFSSLSYETLALLQGGEVGKALLYAFGSLFLGLLLAFLGYRLGGALVG.

4 helical membrane passes run 7–27 (LLVA…GAWV), 31–51 (LGAG…FLIG), 68–88 (LFLA…SYET), and 97–117 (VGKA…LAFL). Na(+) is bound by residues glycine 76 and threonine 79.

The protein belongs to the fluoride channel Fluc/FEX (TC 1.A.43) family.

Its subcellular location is the cell inner membrane. It catalyses the reaction fluoride(in) = fluoride(out). Its activity is regulated as follows. Na(+) is not transported, but it plays an essential structural role and its presence is essential for fluoride channel function. Its function is as follows. Fluoride-specific ion channel. Important for reducing fluoride concentration in the cell, thus reducing its toxicity. This is Fluoride-specific ion channel FluC from Thermus thermophilus (strain ATCC BAA-163 / DSM 7039 / HB27).